Reading from the N-terminus, the 963-residue chain is Non-ribosomal peptide synthetase CmlP (963 aa).

The region spanning 492–568 (GEDAAELRRV…AAFLRHLRGE (77 aa)) is the Carrier domain. An O-(pantetheine 4'-phosphoryl)serine modification is found at S526. The disordered stretch occupies residues 928-963 (GRLLGTPPDTPAGDRPERTGTTAEAQNGAAHAPTPR).

It belongs to the ATP-dependent AMP-binding enzyme family. Requires pantetheine 4'-phosphate as cofactor.

It catalyses the reaction 4-amino-L-phenylalanine + holo-[peptidyl-carrier protein] + ATP = 4-amino-L-phenylalanyl-[peptidyl-carrier protein] + AMP + diphosphate. It functions in the pathway antibiotic biosynthesis. In terms of biological role, involved in chloramphenicol biosynthesis. Activates 4-amino-L-phenylalanine by adenylation and loads it onto its peptidyl carrier domain, via a thioester linkage to the phosphopanthetheine moiety. Can also adenylate tyrosine and phenylalanine at low rates, but not L-p-nitrophenylalanine or threo-phenylserine. This chain is Non-ribosomal peptide synthetase CmlP, found in Streptomyces venezuelae (strain ATCC 10712 / CBS 650.69 / DSM 40230 / JCM 4526 / NBRC 13096 / PD 04745).